The primary structure comprises 879 residues: Alanine--tRNA ligase (879 aa).

Residues histidine 566, histidine 570, cysteine 668, and histidine 672 each coordinate Zn(2+).

This sequence belongs to the class-II aminoacyl-tRNA synthetase family. Requires Zn(2+) as cofactor.

Its subcellular location is the cytoplasm. The enzyme catalyses tRNA(Ala) + L-alanine + ATP = L-alanyl-tRNA(Ala) + AMP + diphosphate. Its function is as follows. Catalyzes the attachment of alanine to tRNA(Ala) in a two-step reaction: alanine is first activated by ATP to form Ala-AMP and then transferred to the acceptor end of tRNA(Ala). Also edits incorrectly charged Ser-tRNA(Ala) and Gly-tRNA(Ala) via its editing domain. This is Alanine--tRNA ligase from Clostridium tetani (strain Massachusetts / E88).